Here is a 492-residue protein sequence, read N- to C-terminus: Metal cation symporter ZIP14 (492 aa).

A signal peptide spans 1–30 (MKLLLLHPAFQSCLLLTLLGLWRTTPEAHA). Residues 31–157 (SSLGAPAISA…PSAVEVWGYG (127 aa)) lie on the Extracellular side of the membrane. Residues Asn77, Asn87, and Asn102 are each glycosylated (N-linked (GlcNAc...) asparagine). A helical membrane pass occupies residues 158–178 (LLCVTVISLCSLLGASVVPFM). Topologically, residues 179-186 (KKTFYKRL) are cytoplasmic. The helical transmembrane segment at 187 to 207 (LLYFIALAIGTLYSNALFQLI) threads the bilayer. Topologically, residues 208-224 (PEAFGFNPLEDYYVSKS) are extracellular. The helical transmembrane segment at 225–245 (AVVFGGFYLFFFTEKILKILL) threads the bilayer. Residues 246–397 (KQKNEHHHGH…LLNAGMSIQQ (152 aa)) lie on the Cytoplasmic side of the membrane. The HHHGHXHX-motif signature appears at 251–258 (HHHGHSHY). The XEXPHE-motif signature appears at 376-381 (EEFPHE). Residues 398–418 (ALFFNFLSACCCYLGLAFGIL) traverse the membrane as a helical segment. The Extracellular portion of the chain corresponds to 419–424 (AGSHFS). Residues 425–445 (ANWIFALAGGMFLYISLADMF) form a helical membrane-spanning segment. Residues 446–460 (PEMNEVCQEDERKGS) are Cytoplasmic-facing. Residues 461–481 (ILIPFIIQNLGLLTGFTIMVV) form a helical membrane-spanning segment. Topologically, residues 482 to 492 (LTMYSGQIQIG) are extracellular.

The protein belongs to the ZIP transporter (TC 2.A.5) family. Homotrimer. Post-translationally, ubiquitinated. Ubiquitination occurs upon iron depletion. The ubiquitinated form undergoes proteasomal degradation. In terms of processing, N-glycosylated. N-glycosylation at Asn-102 is required for iron-regulated extraction of the transporter from membranes and subsequent proteasomal degradation. Ubiquitously expressed, with higher expression in liver, pancreas, fetal liver, thyroid gland, left and right ventricle, right atrium and fetal heart. Weakly expressed in spleen, thymus, and peripheral blood leukocytes. Expressed in liver and in brain by large neurons in the globus pallidus, the insular cortex and the dentate nucleus and to a lower extent in the putamen and the caudate nucleus (at protein level). Expressed in osteoblasts and giant osteoclast-like cells, but not in osteocytes found osteoblastoma and giant cell tumors (at protein level). Expressed by microvascular capillary endothelial cells that constitute the blood-brain barrier (at protein level). Expressed by macrophages. As to expression, widely expressed but not detected in brain, heart, skeletal muscle, placenta and fetal skin.

It is found in the cell membrane. Its subcellular location is the apical cell membrane. The protein resides in the basolateral cell membrane. The protein localises to the early endosome membrane. It localises to the late endosome membrane. It is found in the lysosome membrane. The catalysed reaction is Zn(2+)(out) + 2 hydrogencarbonate(out) = Zn(2+)(in) + 2 hydrogencarbonate(in). It catalyses the reaction Mn(2+)(out) + 2 hydrogencarbonate(out) = Mn(2+)(in) + 2 hydrogencarbonate(in). It carries out the reaction Fe(2+)(out) + 2 hydrogencarbonate(out) = Fe(2+)(in) + 2 hydrogencarbonate(in). The enzyme catalyses Cd(2+)(out) + 2 hydrogencarbonate(out) = Cd(2+)(in) + 2 hydrogencarbonate(in). Electroneutral transporter of the plasma membrane mediating the cellular uptake of the divalent metal cations zinc, manganese and iron that are important for tissue homeostasis, metabolism, development and immunity. Functions as an energy-dependent symporter, transporting through the membranes an electroneutral complex composed of a divalent metal cation and two bicarbonate anions. Beside these endogenous cellular substrates, can also import cadmium a non-essential metal which is cytotoxic and carcinogenic. Controls the cellular uptake by the intestinal epithelium of systemic zinc, which is in turn required to maintain tight junctions and the intestinal permeability. Modifies the activity of zinc-dependent phosphodiesterases, thereby indirectly regulating G protein-coupled receptor signaling pathways important for gluconeogenesis and chondrocyte differentiation. Regulates insulin receptor signaling, glucose uptake, glycogen synthesis and gluconeogenesis in hepatocytes through the zinc-dependent intracellular catabolism of insulin. Through zinc cellular uptake also plays a role in the adaptation of cells to endoplasmic reticulum stress. Major manganese transporter of the basolateral membrane of intestinal epithelial cells, it plays a central role in manganese systemic homeostasis through intestinal manganese uptake. Also involved in manganese extracellular uptake by cells of the blood-brain barrier. May also play a role in manganese and zinc homeostasis participating in their elimination from the blood through the hepatobiliary excretion. Also functions in the extracellular uptake of free iron. May also function intracellularly and mediate the transport from endosomes to cytosol of iron endocytosed by transferrin. Plays a role in innate immunity by regulating the expression of cytokines by activated macrophages. This is Metal cation symporter ZIP14 from Homo sapiens (Human).